The primary structure comprises 457 residues: Bifunctional protein GlmU (457 aa).

The segment at 1–230 (MSKRYAVVLA…FEESLGVNDR (230 aa)) is pyrophosphorylase. Residues 9-12 (LAAG), Lys-23, Gln-73, and 78-79 (GT) contribute to the UDP-N-acetyl-alpha-D-glucosamine site. Asp-103 lines the Mg(2+) pocket. Gly-140, Glu-155, Asn-170, and Asn-228 together coordinate UDP-N-acetyl-alpha-D-glucosamine. Residue Asn-228 coordinates Mg(2+). Residues 231-251 (IALAEASRLMQRRINENHMRN) are linker. Residues 252–457 (GVTLVNPENT…GYAKHLNHGK (206 aa)) form an N-acetyltransferase region. UDP-N-acetyl-alpha-D-glucosamine contacts are provided by Arg-333 and Lys-351. His-363 (proton acceptor) is an active-site residue. 2 residues coordinate UDP-N-acetyl-alpha-D-glucosamine: Tyr-366 and Asn-377. Acetyl-CoA contacts are provided by residues 386–387 (NY), Ala-423, and Arg-440.

It in the N-terminal section; belongs to the N-acetylglucosamine-1-phosphate uridyltransferase family. The protein in the C-terminal section; belongs to the transferase hexapeptide repeat family. As to quaternary structure, homotrimer. Mg(2+) is required as a cofactor.

It localises to the cytoplasm. The catalysed reaction is alpha-D-glucosamine 1-phosphate + acetyl-CoA = N-acetyl-alpha-D-glucosamine 1-phosphate + CoA + H(+). It catalyses the reaction N-acetyl-alpha-D-glucosamine 1-phosphate + UTP + H(+) = UDP-N-acetyl-alpha-D-glucosamine + diphosphate. It functions in the pathway nucleotide-sugar biosynthesis; UDP-N-acetyl-alpha-D-glucosamine biosynthesis; N-acetyl-alpha-D-glucosamine 1-phosphate from alpha-D-glucosamine 6-phosphate (route II): step 2/2. Its pathway is nucleotide-sugar biosynthesis; UDP-N-acetyl-alpha-D-glucosamine biosynthesis; UDP-N-acetyl-alpha-D-glucosamine from N-acetyl-alpha-D-glucosamine 1-phosphate: step 1/1. The protein operates within bacterial outer membrane biogenesis; LPS lipid A biosynthesis. In terms of biological role, catalyzes the last two sequential reactions in the de novo biosynthetic pathway for UDP-N-acetylglucosamine (UDP-GlcNAc). The C-terminal domain catalyzes the transfer of acetyl group from acetyl coenzyme A to glucosamine-1-phosphate (GlcN-1-P) to produce N-acetylglucosamine-1-phosphate (GlcNAc-1-P), which is converted into UDP-GlcNAc by the transfer of uridine 5-monophosphate (from uridine 5-triphosphate), a reaction catalyzed by the N-terminal domain. This chain is Bifunctional protein GlmU, found in Listeria monocytogenes serotype 4b (strain F2365).